We begin with the raw amino-acid sequence, 154 residues long: 6,7-dimethyl-8-ribityllumazine synthase (154 aa).

Residues phenylalanine 23, 57–59, and 81–83 each bind 5-amino-6-(D-ribitylamino)uracil; these read AYE and AVI. 86–87 contacts (2S)-2-hydroxy-3-oxobutyl phosphate; that stretch reads AT. The active-site Proton donor is histidine 89. 5-amino-6-(D-ribitylamino)uracil is bound at residue phenylalanine 114. Arginine 128 is a binding site for (2S)-2-hydroxy-3-oxobutyl phosphate.

It belongs to the DMRL synthase family.

It carries out the reaction (2S)-2-hydroxy-3-oxobutyl phosphate + 5-amino-6-(D-ribitylamino)uracil = 6,7-dimethyl-8-(1-D-ribityl)lumazine + phosphate + 2 H2O + H(+). It participates in cofactor biosynthesis; riboflavin biosynthesis; riboflavin from 2-hydroxy-3-oxobutyl phosphate and 5-amino-6-(D-ribitylamino)uracil: step 1/2. Its function is as follows. Catalyzes the formation of 6,7-dimethyl-8-ribityllumazine by condensation of 5-amino-6-(D-ribitylamino)uracil with 3,4-dihydroxy-2-butanone 4-phosphate. This is the penultimate step in the biosynthesis of riboflavin. The sequence is that of 6,7-dimethyl-8-ribityllumazine synthase from Desulforamulus reducens (strain ATCC BAA-1160 / DSM 100696 / MI-1) (Desulfotomaculum reducens).